Here is a 224-residue protein sequence, read N- to C-terminus: 2,5-diamino-6-ribosylamino-4(3H)-pyrimidinone 5'-phosphate reductase (224 aa).

NADP(+) is bound by residues glycine 16, threonine 57, aspartate 61, 83–86, valine 134, and 156–159; these read SKLR and GGTL.

The protein belongs to the HTP reductase family. As to quaternary structure, homodimer.

It carries out the reaction 2,5-diamino-6-(1-D-ribitylamino)pyrimidin-4(3H)-one 5'-phosphate + NADP(+) = 2,5-diamino-6-(1-D-ribosylamino)pyrimidin-4(3H)-one 5'-phosphate + NADPH + H(+). It catalyses the reaction 2,5-diamino-6-(1-D-ribitylamino)pyrimidin-4(3H)-one 5'-phosphate + NAD(+) = 2,5-diamino-6-(1-D-ribosylamino)pyrimidin-4(3H)-one 5'-phosphate + NADH + H(+). It functions in the pathway cofactor biosynthesis; riboflavin biosynthesis. Functionally, catalyzes an early step in riboflavin biosynthesis, the NAD(P)H-dependent reduction of the ribose side chain of 2,5-diamino-6-ribosylamino-4(3H)-pyrimidinone 5'-phosphate, yielding 2,5-diamino-6-ribitylamino-4(3H)-pyrimidinone 5'-phosphate. The beta anomer is the authentic substrate, and the alpha anomer can serve as substrate subsequent to spontaneous anomerization. NADPH and NADH function equally well as the reductants. Does not catalyze the reduction of 5-amino-6-(5-phospho-D-ribosylamino)uracil to 5-amino-6-(5-phospho-D-ribitylamino)uracil. The chain is 2,5-diamino-6-ribosylamino-4(3H)-pyrimidinone 5'-phosphate reductase (arfC) from Methanocaldococcus jannaschii (strain ATCC 43067 / DSM 2661 / JAL-1 / JCM 10045 / NBRC 100440) (Methanococcus jannaschii).